We begin with the raw amino-acid sequence, 59 residues long: Alpha-conotoxin CIA (59 aa).

An N-terminal signal peptide occupies residues 1–16 (MFTVFLLVVLTITVVS). The propeptide occupies 17–42 (FPSDRASDGRDDEAKDERSDMYKSKR). 2 disulfide bridges follow: C46/C51 and C47/C57. C57 is modified (cysteine amide).

This sequence belongs to the conotoxin A superfamily. As to expression, expressed by the venom duct.

The protein resides in the secreted. Its function is as follows. Alpha-conotoxins act on postsynaptic membranes, they bind to the nicotinic acetylcholine receptors (nAChR) and thus inhibit them. This toxin blocks the rat muscle nAChRs alpha-1-beta-1-gamma-delta (CHRNA1-CHRNB1-CHRNG-CHRND) (IC(50)=5.7 nM) and the rat neuronal nAChR alpha-3-beta-2/CHRNA3-CHRNB2 (IC(50)=2060 nM). In vivo, intramuscular injection into zebrafish produces rapid flaccid paralysis. The polypeptide is Alpha-conotoxin CIA (Conus catus (Cat cone)).